A 544-amino-acid polypeptide reads, in one-letter code: Chaperonin GroEL (544 aa).

ATP is bound by residues 30-33 (TLGP), lysine 51, 87-91 (DGTTT), glycine 415, 481-483 (DAL), and aspartate 497.

It belongs to the chaperonin (HSP60) family. As to quaternary structure, forms a cylinder of 14 subunits composed of two heptameric rings stacked back-to-back. Interacts with the co-chaperonin GroES.

It localises to the cytoplasm. The catalysed reaction is ATP + H2O + a folded polypeptide = ADP + phosphate + an unfolded polypeptide.. Its function is as follows. Together with its co-chaperonin GroES, plays an essential role in assisting protein folding. The GroEL-GroES system forms a nano-cage that allows encapsulation of the non-native substrate proteins and provides a physical environment optimized to promote and accelerate protein folding. The protein is Chaperonin GroEL of Chlamydia muridarum (strain MoPn / Nigg).